Reading from the N-terminus, the 398-residue chain is Phosphoglycerate kinase (398 aa).

Residues 21–23 (DFN), Arg-36, 59–62 (HLGR), Arg-119, and Arg-157 contribute to the substrate site. Residues Lys-208, Gly-296, Glu-327, and 354–357 (GGDS) contribute to the ATP site.

Belongs to the phosphoglycerate kinase family. Monomer.

It is found in the cytoplasm. The catalysed reaction is (2R)-3-phosphoglycerate + ATP = (2R)-3-phospho-glyceroyl phosphate + ADP. It functions in the pathway carbohydrate degradation; glycolysis; pyruvate from D-glyceraldehyde 3-phosphate: step 2/5. The chain is Phosphoglycerate kinase from Streptococcus pneumoniae serotype 4 (strain ATCC BAA-334 / TIGR4).